We begin with the raw amino-acid sequence, 72 residues long: Translation initiation factor IF-1 (72 aa).

The S1-like domain maps to 1–72 (MAKKDVIELE…TRGRITWRKK (72 aa)).

The protein belongs to the IF-1 family. In terms of assembly, component of the 30S ribosomal translation pre-initiation complex which assembles on the 30S ribosome in the order IF-2 and IF-3, IF-1 and N-formylmethionyl-tRNA(fMet); mRNA recruitment can occur at any time during PIC assembly.

The protein resides in the cytoplasm. One of the essential components for the initiation of protein synthesis. Stabilizes the binding of IF-2 and IF-3 on the 30S subunit to which N-formylmethionyl-tRNA(fMet) subsequently binds. Helps modulate mRNA selection, yielding the 30S pre-initiation complex (PIC). Upon addition of the 50S ribosomal subunit IF-1, IF-2 and IF-3 are released leaving the mature 70S translation initiation complex. This Clostridioides difficile (strain 630) (Peptoclostridium difficile) protein is Translation initiation factor IF-1.